The chain runs to 110 residues: UPF0102 protein HH_1751 (110 aa).

Belongs to the UPF0102 family.

The sequence is that of UPF0102 protein HH_1751 from Helicobacter hepaticus (strain ATCC 51449 / 3B1).